Reading from the N-terminus, the 687-residue chain is Threonine--tRNA ligase (687 aa).

In terms of domain architecture, TGS spans 1–67 (MAHLIEAAPN…EQDSKFTPVP (67 aa)). The tract at residues 266-572 (DHRRLGAELD…LLEHYAGAFP (307 aa)) is catalytic. The Zn(2+) site is built by cysteine 371, histidine 422, and histidine 549.

The protein belongs to the class-II aminoacyl-tRNA synthetase family. In terms of assembly, homodimer. The cofactor is Zn(2+).

The protein localises to the cytoplasm. The catalysed reaction is tRNA(Thr) + L-threonine + ATP = L-threonyl-tRNA(Thr) + AMP + diphosphate + H(+). Catalyzes the attachment of threonine to tRNA(Thr) in a two-step reaction: L-threonine is first activated by ATP to form Thr-AMP and then transferred to the acceptor end of tRNA(Thr). Also edits incorrectly charged L-seryl-tRNA(Thr). This chain is Threonine--tRNA ligase, found in Corynebacterium diphtheriae (strain ATCC 700971 / NCTC 13129 / Biotype gravis).